Reading from the N-terminus, the 145-residue chain is uncharacterized protein (145 aa).

This is an uncharacterized protein from Sinorhizobium fredii (strain NBRC 101917 / NGR234).